The sequence spans 76 residues: Small ribosomal subunit protein bS18 (76 aa).

This sequence belongs to the bacterial ribosomal protein bS18 family. Part of the 30S ribosomal subunit. Forms a tight heterodimer with protein bS6.

In terms of biological role, binds as a heterodimer with protein bS6 to the central domain of the 16S rRNA, where it helps stabilize the platform of the 30S subunit. This Nitrosomonas eutropha (strain DSM 101675 / C91 / Nm57) protein is Small ribosomal subunit protein bS18.